Consider the following 492-residue polypeptide: Cysteine--tRNA ligase (492 aa).

Cys31 lines the Zn(2+) pocket. The 'HIGH' region motif lies at 33 to 43 (PTVYGDPHLGH). Cys226, His251, and Glu255 together coordinate Zn(2+). The 'KMSKS' region motif lies at 283 to 287 (KMGKS). ATP is bound at residue Lys286.

This sequence belongs to the class-I aminoacyl-tRNA synthetase family. As to quaternary structure, monomer. Requires Zn(2+) as cofactor.

It is found in the cytoplasm. It catalyses the reaction tRNA(Cys) + L-cysteine + ATP = L-cysteinyl-tRNA(Cys) + AMP + diphosphate. The sequence is that of Cysteine--tRNA ligase from Azobacteroides pseudotrichonymphae genomovar. CFP2.